Here is a 227-residue protein sequence, read N- to C-terminus: NAD(P)H-quinone oxidoreductase subunit K, chloroplastic (227 aa).

Residues C43, C44, C108, and C139 each contribute to the [4Fe-4S] cluster site.

Belongs to the complex I 20 kDa subunit family. NDH is composed of at least 16 different subunits, 5 of which are encoded in the nucleus. It depends on [4Fe-4S] cluster as a cofactor.

Its subcellular location is the plastid. It is found in the chloroplast thylakoid membrane. The enzyme catalyses a plastoquinone + NADH + (n+1) H(+)(in) = a plastoquinol + NAD(+) + n H(+)(out). It catalyses the reaction a plastoquinone + NADPH + (n+1) H(+)(in) = a plastoquinol + NADP(+) + n H(+)(out). Functionally, NDH shuttles electrons from NAD(P)H:plastoquinone, via FMN and iron-sulfur (Fe-S) centers, to quinones in the photosynthetic chain and possibly in a chloroplast respiratory chain. The immediate electron acceptor for the enzyme in this species is believed to be plastoquinone. Couples the redox reaction to proton translocation, and thus conserves the redox energy in a proton gradient. This Ranunculus macranthus (Large buttercup) protein is NAD(P)H-quinone oxidoreductase subunit K, chloroplastic.